The sequence spans 393 residues: Chalcone synthase G (393 aa).

Residue C164 is part of the active site.

The protein belongs to the thiolase-like superfamily. Chalcone/stilbene synthases family. As to expression, expressed in seedlings after illumination with UV light. No expression detectable in flowers. It is not known for sure whether CHSG encodes a chalcone synthase or a very closely related condensing enzyme.

It catalyses the reaction (E)-4-coumaroyl-CoA + 3 malonyl-CoA + 3 H(+) = 2',4,4',6'-tetrahydroxychalcone + 3 CO2 + 4 CoA. It functions in the pathway secondary metabolite biosynthesis; flavonoid biosynthesis. Its function is as follows. The primary product of this enzyme is 4,2',4',6'-tetrahydroxychalcone (also termed naringenin-chalcone or chalcone) which can under specific conditions spontaneously isomerize into naringenin. The sequence is that of Chalcone synthase G (CHSG) from Petunia hybrida (Petunia).